A 116-amino-acid chain; its full sequence is Large ribosomal subunit protein bL20 (116 aa).

It belongs to the bacterial ribosomal protein bL20 family.

Binds directly to 23S ribosomal RNA and is necessary for the in vitro assembly process of the 50S ribosomal subunit. It is not involved in the protein synthesizing functions of that subunit. In Thermosynechococcus vestitus (strain NIES-2133 / IAM M-273 / BP-1), this protein is Large ribosomal subunit protein bL20.